The primary structure comprises 462 residues: Fumarate hydratase class II (462 aa).

Substrate-binding positions include 98–100 (SGT), Arg126, 129–132 (HPND), 139–141 (SSN), and Thr187. The disordered stretch occupies residues 120 to 141 (GTRGKGRKVHPNDHVNKGQSSN). His188 (proton donor/acceptor) is an active-site residue. Residue Ser318 is part of the active site. Substrate is bound by residues Ser319 and 324–326 (KVN).

Belongs to the class-II fumarase/aspartase family. Fumarase subfamily. Homotetramer.

It is found in the cytoplasm. The enzyme catalyses (S)-malate = fumarate + H2O. The protein operates within carbohydrate metabolism; tricarboxylic acid cycle; (S)-malate from fumarate: step 1/1. Functionally, involved in the TCA cycle. Catalyzes the stereospecific interconversion of fumarate to L-malate. The polypeptide is Fumarate hydratase class II (Nitrosomonas europaea (strain ATCC 19718 / CIP 103999 / KCTC 2705 / NBRC 14298)).